Here is a 422-residue protein sequence, read N- to C-terminus: MNKLHQWKERLRDRARTVSFGRFLWRRFLDDRLFQAAASLAYTTVFALVPLAIVVFGVLSAFPAFNEWKDALTDFIFNNFVPGAARSVQNYLNRSLEDLGKFTVAGMVALVASLLITLHSIEQTFNSIWRVAAARPKVTRFLIYWTVLTLGTMLAAASMAMAAYVFALPLFRTTEGQWLAEFAWRLAPMAVEFVCIVLIYRVVPQHVVRLRHALPGALLAVILMEIVKWGFGFYLGNFQTYQRIYGALSALPILLLWIYLSWVSVLLGASLASSMSAFRYQPEAMRLPPGFEIYGLLRLLGRFSQARVHGDGLDEDRILALEPMLTDTLMQELLCELKRIRLLRRDERGQWLLARDLDVVPLAELYENCQLRVPIEDRPLPCRDDAFGQAAAAALEQLRQPLRSVLAQPVGDLYTHLPGDPP.

Transmembrane regions (helical) follow at residues 45–65 (VFAL…FPAF), 102–122 (FTVA…HSIE), 151–171 (GTML…LPLF), 179–199 (LAEF…IVLI), 213–233 (ALPG…GFGF), and 247–267 (ALSA…SVLL).

The protein belongs to the UPF0761 family.

The protein localises to the cell inner membrane. This Xanthomonas axonopodis pv. citri (strain 306) protein is UPF0761 membrane protein XAC0937.